Consider the following 552-residue polypeptide: Arginine--tRNA ligase (552 aa).

Positions Ala129–Ser139 match the 'HIGH' region motif.

The protein belongs to the class-I aminoacyl-tRNA synthetase family. As to quaternary structure, monomer.

The protein localises to the cytoplasm. It catalyses the reaction tRNA(Arg) + L-arginine + ATP = L-arginyl-tRNA(Arg) + AMP + diphosphate. The chain is Arginine--tRNA ligase from Frankia alni (strain DSM 45986 / CECT 9034 / ACN14a).